A 532-amino-acid polypeptide reads, in one-letter code: MEKVREARIARTLATQHPDATKFVRVQEEPEEAVECLVELGAEEYMVDFEGKLTPYLQPIQVLMELYDAGVRVGEERFVIVRVPSATKENVLRQVQALLGVMEANSELLKEDPDARGIFEVVHPMTSSPEELVETVDRISYARRFASRELDVPLKAGNLRIIPLIEEVPELLDIRNILTGYVEGMREIGMDVSYLRVFIGRSDPALSYGHLPAVLACKLAIFEVYELSDELGVPMAPILGGGCLPFRGHIRPGMEEEFVEEYAGTATYTVQSGFRYDHDREKAVASIRRINELAANDPLQLSGDDIEYLVLATAIFMKHYLSVFFRCIGTLNIVADMIPNTRDRLARKGPVGYARDIPEPDRVGAQCKDLGDVGRELYRELRRMRVEKLPELPRAIKFTGACYTVGMPPELIGTGRGLAEIEERLGEDALDAVISRLYPMLREDLQFAVEYTFLETAGSVLPSSGVAMVNTDLEYCVEYLDLEPPSDFEYQNLVHTLEPYLRYVVSEGGVEEVNPFVRDLLLEMGRMRGSLG.

The protein belongs to the PEPCase type 2 family. Homotetramer. It depends on Mg(2+) as a cofactor.

The catalysed reaction is oxaloacetate + phosphate = phosphoenolpyruvate + hydrogencarbonate. Functionally, catalyzes the irreversible beta-carboxylation of phosphoenolpyruvate (PEP) to form oxaloacetate (OAA), a four-carbon dicarboxylic acid source for the tricarboxylic acid cycle. The polypeptide is Phosphoenolpyruvate carboxylase (Methanopyrus kandleri (strain AV19 / DSM 6324 / JCM 9639 / NBRC 100938)).